A 282-amino-acid chain; its full sequence is Elongation factor Ts (282 aa).

Positions 80–83 (TDFV) are involved in Mg(2+) ion dislocation from EF-Tu.

The protein belongs to the EF-Ts family.

It localises to the cytoplasm. Functionally, associates with the EF-Tu.GDP complex and induces the exchange of GDP to GTP. It remains bound to the aminoacyl-tRNA.EF-Tu.GTP complex up to the GTP hydrolysis stage on the ribosome. This is Elongation factor Ts from Protochlamydia amoebophila (strain UWE25).